A 245-amino-acid chain; its full sequence is Actin-like protein 10 (245 aa).

The protein belongs to the actin family.

The polypeptide is Actin-like protein 10 (ACTL10) (Homo sapiens (Human)).